Here is an 865-residue protein sequence, read N- to C-terminus: Leucine-rich repeat-containing protein 66 (865 aa).

A helical membrane pass occupies residues 4–24; it reads FYARVTVMVTGLCFVGTVTNP. Asn42 is a glycosylation site (N-linked (GlcNAc...) asparagine). LRR repeat units follow at residues 138–160, 161–182, 185–206, 209–230, and 235–255; these read RLKV…WKLK, PLCS…GFHG, QLKS…AFKG, KLQV…VTIA, and NLEL…ANFQ. N-linked (GlcNAc...) asparagine glycosylation is present at Asn248. Residues 366–386 traverse the membrane as a helical segment; the sequence is ALAVCLSVFITFVVAFCLGAF. Disordered regions lie at residues 463–522 and 654–749; these read RMLG…PGQH and DTPS…AESV. A compositionally biased stretch (polar residues) spans 470-479; sequence MDPSSQQSPG. Positions 675–688 are enriched in basic and acidic residues; it reads AVQRDASFDPHDDL. The span at 702–713 shows a compositional bias: polar residues; sequence FTLSSEGSQDTR. Residues Ser714 and Ser748 each carry the phosphoserine modification. The 32-residue stretch at 728-759 folds into the LRRNT domain; that stretch reads SQPLPSRNLGEYKDSVTSAESVEDITSQQTLE. N-linked (GlcNAc...) asparagine glycosylation occurs at Asn787. A disordered region spans residues 840-865; the sequence is FPNIDSSPSPPCSDQDPSDPEEHDTK. The segment covering 855–865 has biased composition (acidic residues); that stretch reads DPSDPEEHDTK.

It is found in the membrane. The polypeptide is Leucine-rich repeat-containing protein 66 (Lrrc66) (Rattus norvegicus (Rat)).